Here is a 592-residue protein sequence, read N- to C-terminus: Tetrathionate sensor histidine kinase TtrS (592 aa).

Transmembrane regions (helical) follow at residues 11 to 31 (VLAAVGLLCHGAWAGTWNIGI) and 307 to 327 (VGGVILAFLLLTLNYIWVMLL). Residues 364-581 (GFAHELNQPL…VVTIHFLHEN (218 aa)) enclose the Histidine kinase domain. Phosphohistidine; by autocatalysis is present on H367.

In terms of processing, autophosphorylated.

The protein localises to the cell inner membrane. It catalyses the reaction ATP + protein L-histidine = ADP + protein N-phospho-L-histidine.. Its function is as follows. Member of the two-component regulatory system TtrR/TtrS, which is required for synthesis of tetrathionate reductase. Probably functions as a sensor protein kinase which is autophosphorylated at a histidine residue in response to tetrathionate, and transfers its phosphate group to TtrR. During mice infection, the ability to use tetrathionate as an electron acceptor is a growth advantage for S.typhimurium over the competing microbiota in the lumen of the inflamed gut. In Salmonella typhimurium (strain LT2 / SGSC1412 / ATCC 700720), this protein is Tetrathionate sensor histidine kinase TtrS (ttrS).